The sequence spans 192 residues: Fe/S biogenesis protein NfuA (192 aa).

Positions 149 and 152 each coordinate [4Fe-4S] cluster.

The protein belongs to the NfuA family. Homodimer. [4Fe-4S] cluster serves as cofactor.

In terms of biological role, involved in iron-sulfur cluster biogenesis. Binds a 4Fe-4S cluster, can transfer this cluster to apoproteins, and thereby intervenes in the maturation of Fe/S proteins. Could also act as a scaffold/chaperone for damaged Fe/S proteins. This is Fe/S biogenesis protein NfuA from Idiomarina loihiensis (strain ATCC BAA-735 / DSM 15497 / L2-TR).